The primary structure comprises 186 residues: uncharacterized protein (186 aa).

The next 3 membrane-spanning stretches (helical) occupy residues isoleucine 42–leucine 62, leucine 80–valine 100, and isoleucine 131–leucine 151.

This sequence to U.parvum UU008, UU041 and UU042.

Its subcellular location is the cell membrane. This is an uncharacterized protein from Ureaplasma parvum serovar 3 (strain ATCC 700970).